We begin with the raw amino-acid sequence, 470 residues long: Sorting nexin-17 (470 aa).

The region spanning 1–109 (MHFSIPETES…SFLRRAQQET (109 aa)) is the PX domain. A 1,2-diacyl-sn-glycero-3-phospho-(1D-myo-inositol-3-phosphate) is bound by residues arginine 36, serine 38, lysine 62, and arginine 75. A Ras-associating domain is found at 115 to 206 (EEVSLEVLLS…YKIVLRKSYW (92 aa)). The FERM-like stretch occupies residues 115–432 (EEVSLEVLLS…DATRESMVKL (318 aa)). Positions 270–432 (GYLRFDACVA…DATRESMVKL (163 aa)) are PTB-like F3 module. 7 positions are modified to phosphoserine: serine 336, serine 407, serine 409, serine 415, serine 421, serine 437, and serine 440. The tract at residues 401–426 (GGTLRRSDSQQAVKSPPLLESPDATR) is disordered. The interacts with the retriever complex stretch occupies residues 458–470 (GNFAFEGIGDEDL).

It belongs to the sorting nexin family. As to quaternary structure, monomer. Interacts with APP (via cytoplasmic YXNPXY motif). Interacts with KIF1B. Interacts with the C-termini of P-selectin, PTC, LDLR, VLDLR, LRP1 and LRP8. Interacts with KRIT1 (via N-terminus). Interacts with HRAS. Interacts with ITGB1 and ITGB5 (via NPxY motif). Interacts with CCDC22 and CCDC93; the interaction associates SNX17 with the CCC complex. Interacts (via C-terminus) with VPS26C and VPS35L; the interactions are direct and associate SNX17 with the retriever complex.

The protein localises to the cytoplasm. It is found in the early endosome. The protein resides in the cytoplasmic vesicle membrane. Critical regulator of endosomal recycling of numerous surface proteins, including integrins, signaling receptor and channels. Binds to NPxY sequences in the cytoplasmic tails of target cargos. Associates with retriever and CCC complexes to prevent lysosomal degradation and promote cell surface recycling of numerous cargos such as integrins ITGB1, ITGB5 and their associated alpha subunits. Also required for maintenance of normal cell surface levels of APP and LRP1. Interacts with membranes containing phosphatidylinositol 3-phosphate (PtdIns(3P)). In Homo sapiens (Human), this protein is Sorting nexin-17 (SNX17).